Consider the following 211-residue polypeptide: Type II secretion system protein J (211 aa).

Residues 1–7 constitute a propeptide, leader sequence; it reads MRPRAAG. Residue F8 is modified to N-methylphenylalanine. Residues 8 to 28 traverse the membrane as a helical segment; that stretch reads FTLIEVLLATMLLVGGLALAF.

Belongs to the GSP J family.

It localises to the membrane. Involved in a type II secretion system (T2SS, formerly general secretion pathway, GSP) for the export of proteins. This Xanthomonas campestris pv. campestris (strain ATCC 33913 / DSM 3586 / NCPPB 528 / LMG 568 / P 25) protein is Type II secretion system protein J (xpsJ).